A 42-amino-acid chain; its full sequence is Aryl-alcohol dehydrogenase (42 aa).

This sequence belongs to the zinc-containing alcohol dehydrogenase family. Homodimer. Requires Zn(2+) as cofactor.

The enzyme catalyses an aromatic primary alcohol + NAD(+) = an aromatic aldehyde + NADH + H(+). Oxidizes primary alcohols with an aromatic or cyclohex-1-ene ring. It is highly specific for benzyl alcohol. The polypeptide is Aryl-alcohol dehydrogenase (Acinetobacter guillouiae (Acinetobacter genomosp. 11)).